We begin with the raw amino-acid sequence, 429 residues long: D-amino acid dehydrogenase 1 (429 aa).

3 to 17 (VLVLGSGVIGVTSAY) contacts FAD.

This sequence belongs to the DadA oxidoreductase family. FAD is required as a cofactor.

It catalyses the reaction a D-alpha-amino acid + A + H2O = a 2-oxocarboxylate + AH2 + NH4(+). Its function is as follows. Oxidative deamination of D-amino acids. This chain is D-amino acid dehydrogenase 1 (dadA1), found in Ralstonia nicotianae (strain ATCC BAA-1114 / GMI1000) (Ralstonia solanacearum).